Here is a 177-residue protein sequence, read N- to C-terminus: UPF0178 protein TP_0845 (177 aa).

Positions 155-177 (EAKTGEEQCDWPSAQGKSQTGRR) are disordered.

Belongs to the UPF0178 family.

The polypeptide is UPF0178 protein TP_0845 (Treponema pallidum (strain Nichols)).